The sequence spans 58 residues: MVAKVNVDLCTGCGSCVDECPAAAISLNDDGIATVDESECLDCGSCEDACPNNAITIE.

4Fe-4S ferredoxin-type domains are found at residues 2-30 (VAKV…LNDD) and 31-58 (GIAT…ITIE). Positions 10, 13, 16, 20, 40, 43, 46, and 50 each coordinate [4Fe-4S] cluster.

It depends on [4Fe-4S] cluster as a cofactor.

Functionally, ferredoxins are iron-sulfur proteins that transfer electrons in a wide variety of metabolic reactions. This Methanosarcina thermophila protein is Probable ferredoxin.